The primary structure comprises 109 residues: Putative double-stranded DNA mimic protein Ent638_2296 (109 aa).

It belongs to the putative dsDNA mimic protein family.

May act as a double-stranded DNA (dsDNA) mimic. Probably regulates the activity of a dsDNA-binding protein. The polypeptide is Putative double-stranded DNA mimic protein Ent638_2296 (Enterobacter sp. (strain 638)).